We begin with the raw amino-acid sequence, 141 residues long: Hemoglobin subunit alpha-A (141 aa).

A Globin domain is found at V1–R141. H58 contributes to the O2 binding site. H87 is a binding site for heme b.

This sequence belongs to the globin family. In terms of assembly, heterotetramer of two alpha chains and two beta chains. As to expression, red blood cells.

Its function is as follows. Involved in oxygen transport from the lung to the various peripheral tissues. The sequence is that of Hemoglobin subunit alpha-A (HBAA) from Passer montanus (Eurasian tree sparrow).